A 513-amino-acid polypeptide reads, in one-letter code: Sulfhydryl oxidase 1 (513 aa).

The N-terminal stretch at 1–30 (MAAAAVARRVVLVLVLAAASLAAAPRGAAA) is a signal peptide. The 144-residue stretch at 31 to 174 (RSLGGREGPG…LLKWINNQMK (144 aa)) folds into the Thioredoxin domain. N-linked (GlcNAc...) asparagine glycosylation is present at Asn-51. Catalysis depends on nucleophile residues Cys-76 and Cys-79. A disulfide bond links Cys-76 and Cys-79. Residues Asn-193 and Asn-266 are each glycosylated (N-linked (GlcNAc...) asparagine). Cys-301 and Cys-313 are joined by a disulfide. An ERV/ALR sulfhydryl oxidase domain is found at 304 to 406 (SKSETRGFSC…GDPLFPKVTW (103 aa)). Residues Arg-309, Trp-316, His-320, Glu-350, His-354, 377–384 (WSTHNKVN), Lys-403, and Trp-406 each bind FAD. Cys-348 and Cys-351 are oxidised to a cystine. Cys-412 and Cys-415 form a disulfide bridge.

FAD is required as a cofactor.

The protein resides in the secreted. It carries out the reaction 2 R'C(R)SH + O2 = R'C(R)S-S(R)CR' + H2O2. In terms of biological role, catalyzes the oxidation of sulfhydryl groups in peptide and protein thiols to disulfides with the reduction of oxygen to hydrogen peroxide. May contribute to disulfide bond formation in a variety of secreted proteins. In Oryza sativa subsp. japonica (Rice), this protein is Sulfhydryl oxidase 1 (QSOX1).